The chain runs to 386 residues: MKIHEYQGKELLKQFGVTVPRGIPAFSVDEAVAAAEKLGGPVWVVKAQIHAGGRGKGGGVKLGRSIDEVRQLSSEILGMQLVTHQTGPQGQKVRRLLIEEGADIKKEYYVGIVTDRGTQRVCVMASSEGGMDIEEVAAHSPEKILKVFVDPAAGLTDAEAAELARGIGVPEASVGKAAAEFQKLYKAYWDTDASLAEINPLILTGSGDIIALDAKFNFDSNALFRHPEIVAYRDLDEEDPAEIEASKFDLAYIQLDGNIGCLVNGAGLAMATMDTIKLFGGEPANFLDVGGGATAEKVTEAFKIMLKNKSVKAILVNIFGGIMRCDVIAEGVITACKAVNLNVPLVVRMKGTNEELGKKMLAESGLPIISADTMAEAATKVVAAVK.

The 236-residue stretch at 9–244 (KELLKQFGVT…LDEEDPAEIE (236 aa)) folds into the ATP-grasp domain. Residues Lys-46, 53 to 55 (GRG), Glu-99, Ala-102, and Glu-107 each bind ATP. Residues Asn-199 and Asp-213 each contribute to the Mg(2+) site. Substrate is bound by residues Asn-264 and 321-323 (GIM).

This sequence belongs to the succinate/malate CoA ligase beta subunit family. In terms of assembly, heterotetramer of two alpha and two beta subunits. Mg(2+) is required as a cofactor.

The enzyme catalyses succinate + ATP + CoA = succinyl-CoA + ADP + phosphate. It carries out the reaction GTP + succinate + CoA = succinyl-CoA + GDP + phosphate. The protein operates within carbohydrate metabolism; tricarboxylic acid cycle; succinate from succinyl-CoA (ligase route): step 1/1. In terms of biological role, succinyl-CoA synthetase functions in the citric acid cycle (TCA), coupling the hydrolysis of succinyl-CoA to the synthesis of either ATP or GTP and thus represents the only step of substrate-level phosphorylation in the TCA. The beta subunit provides nucleotide specificity of the enzyme and binds the substrate succinate, while the binding sites for coenzyme A and phosphate are found in the alpha subunit. This Bordetella pertussis (strain Tohama I / ATCC BAA-589 / NCTC 13251) protein is Succinate--CoA ligase [ADP-forming] subunit beta.